Reading from the N-terminus, the 210-residue chain is RNA chaperone ProQ (210 aa).

The tract at residues 118 to 146 is disordered; that stretch reads KAAKPEKKRPARRVAAKGQHAKETTTNKA. Positions 123–132 are enriched in basic residues; the sequence is EKKRPARRVA.

It belongs to the ProQ family.

Its subcellular location is the cytoplasm. Functionally, RNA chaperone with significant RNA binding, RNA strand exchange and RNA duplexing activities. The sequence is that of RNA chaperone ProQ from Pasteurella multocida (strain Pm70).